The sequence spans 380 residues: Epoxyqueuosine reductase (380 aa).

Catalysis depends on aspartate 134, which acts as the Proton donor. Residues 178–208 (FPPDKPIEDQCGGCTKCIDICPTGALIQGGQ) enclose the 4Fe-4S ferredoxin-type 1 domain. [4Fe-4S] cluster is bound by residues cysteine 188, cysteine 191, cysteine 194, cysteine 198, cysteine 214, cysteine 240, cysteine 243, and cysteine 247. The 4Fe-4S ferredoxin-type 2 domain maps to 226–258 (PEEYRDKIGNRIYGCDTCQTVCPKNKGMDFHNH).

Belongs to the QueG family. In terms of assembly, monomer. Cob(II)alamin is required as a cofactor. [4Fe-4S] cluster serves as cofactor.

Its subcellular location is the cytoplasm. It catalyses the reaction epoxyqueuosine(34) in tRNA + AH2 = queuosine(34) in tRNA + A + H2O. It functions in the pathway tRNA modification; tRNA-queuosine biosynthesis. In terms of biological role, catalyzes the conversion of epoxyqueuosine (oQ) to queuosine (Q), which is a hypermodified base found in the wobble positions of tRNA(Asp), tRNA(Asn), tRNA(His) and tRNA(Tyr). The chain is Epoxyqueuosine reductase from Bacillus cereus (strain ATCC 14579 / DSM 31 / CCUG 7414 / JCM 2152 / NBRC 15305 / NCIMB 9373 / NCTC 2599 / NRRL B-3711).